A 158-amino-acid polypeptide reads, in one-letter code: Cyclic pyranopterin monophosphate synthase (158 aa).

Substrate-binding positions include 76–78 (LCH) and 114–115 (ME). Residue Asp-129 is part of the active site.

The protein belongs to the MoaC family. Homohexamer; trimer of dimers.

It carries out the reaction (8S)-3',8-cyclo-7,8-dihydroguanosine 5'-triphosphate = cyclic pyranopterin phosphate + diphosphate. Its pathway is cofactor biosynthesis; molybdopterin biosynthesis. Functionally, catalyzes the conversion of (8S)-3',8-cyclo-7,8-dihydroguanosine 5'-triphosphate to cyclic pyranopterin monophosphate (cPMP). The polypeptide is Cyclic pyranopterin monophosphate synthase (Shewanella woodyi (strain ATCC 51908 / MS32)).